The chain runs to 399 residues: Lipoyl synthase, mitochondrial (399 aa).

Residues Met1–Ala30 constitute a mitochondrion transit peptide. A compositionally biased stretch (basic and acidic residues) spans Ala31 to Lys41. The interval Ala31–Glu58 is disordered. [4Fe-4S] cluster is bound by residues Cys131, Cys136, Cys142, Cys162, Cys166, Cys169, and Ser375. Residues Gly145–Leu364 form the Radical SAM core domain.

It belongs to the radical SAM superfamily. Lipoyl synthase family. Requires [4Fe-4S] cluster as cofactor.

It localises to the mitochondrion. The catalysed reaction is [[Fe-S] cluster scaffold protein carrying a second [4Fe-4S](2+) cluster] + N(6)-octanoyl-L-lysyl-[protein] + 2 oxidized [2Fe-2S]-[ferredoxin] + 2 S-adenosyl-L-methionine + 4 H(+) = [[Fe-S] cluster scaffold protein] + N(6)-[(R)-dihydrolipoyl]-L-lysyl-[protein] + 4 Fe(3+) + 2 hydrogen sulfide + 2 5'-deoxyadenosine + 2 L-methionine + 2 reduced [2Fe-2S]-[ferredoxin]. Its pathway is protein modification; protein lipoylation via endogenous pathway; protein N(6)-(lipoyl)lysine from octanoyl-[acyl-carrier-protein]: step 2/2. In terms of biological role, catalyzes the radical-mediated insertion of two sulfur atoms into the C-6 and C-8 positions of the octanoyl moiety bound to the lipoyl domains of lipoate-dependent enzymes, thereby converting the octanoylated domains into lipoylated derivatives. This is Lipoyl synthase, mitochondrial from Ostreococcus lucimarinus (strain CCE9901).